The following is a 286-amino-acid chain: Putative sensory transducer protein YfmS (286 aa).

Positions 68-286 constitute a Methyl-accepting transducer domain; the sequence is ITDAIRSNQK…KMAEKALEEE (219 aa).

It belongs to the methyl-accepting chemotaxis (MCP) protein family.

Its function is as follows. Chemotactic-signal transducers respond to changes in the concentration of attractants and repellents in the environment, transduce a signal from the outside to the inside of the cell, and facilitate sensory adaptation through the variation of the level of methylation. Attractants increase the level of methylation while repellents decrease the level of methylation. This is Putative sensory transducer protein YfmS (yfmS) from Bacillus subtilis (strain 168).